The primary structure comprises 696 residues: Polyribonucleotide nucleotidyltransferase (696 aa).

Residues D489 and D495 each contribute to the Mg(2+) site. Positions 556 to 615 (PQYVTMKINPEKIRDVIGKGGVVIREITEATNCAIDISDDGTIKIAAHTTEEGEAAKRRI) constitute a KH domain. An S1 motif domain is found at 625-693 (GKVYEGTVVK…RQGRVRLSMK (69 aa)).

Belongs to the polyribonucleotide nucleotidyltransferase family. As to quaternary structure, component of the RNA degradosome, which is a multiprotein complex involved in RNA processing and mRNA degradation. Mg(2+) is required as a cofactor.

The protein localises to the cytoplasm. The catalysed reaction is RNA(n+1) + phosphate = RNA(n) + a ribonucleoside 5'-diphosphate. Involved in mRNA degradation. Catalyzes the phosphorolysis of single-stranded polyribonucleotides processively in the 3'- to 5'-direction. In Coxiella burnetii (strain CbuG_Q212) (Coxiella burnetii (strain Q212)), this protein is Polyribonucleotide nucleotidyltransferase.